We begin with the raw amino-acid sequence, 124 residues long: UPF0102 protein Noc_0355 (124 aa).

The protein belongs to the UPF0102 family.

The protein is UPF0102 protein Noc_0355 of Nitrosococcus oceani (strain ATCC 19707 / BCRC 17464 / JCM 30415 / NCIMB 11848 / C-107).